The following is a 333-amino-acid chain: Biotin synthase (333 aa).

One can recognise a Radical SAM core domain in the interval 46-275 (YYGKKVKLNM…TKEIRISGGR (230 aa)). [4Fe-4S] cluster contacts are provided by Cys-64, Cys-68, and Cys-71. The [2Fe-2S] cluster site is built by Cys-108, Cys-140, Cys-200, and Arg-270.

The protein belongs to the radical SAM superfamily. Biotin synthase family. Homodimer. [4Fe-4S] cluster serves as cofactor. Requires [2Fe-2S] cluster as cofactor.

It catalyses the reaction (4R,5S)-dethiobiotin + (sulfur carrier)-SH + 2 reduced [2Fe-2S]-[ferredoxin] + 2 S-adenosyl-L-methionine = (sulfur carrier)-H + biotin + 2 5'-deoxyadenosine + 2 L-methionine + 2 oxidized [2Fe-2S]-[ferredoxin]. Its pathway is cofactor biosynthesis; biotin biosynthesis; biotin from 7,8-diaminononanoate: step 2/2. Catalyzes the conversion of dethiobiotin (DTB) to biotin by the insertion of a sulfur atom into dethiobiotin via a radical-based mechanism. This Halalkalibacterium halodurans (strain ATCC BAA-125 / DSM 18197 / FERM 7344 / JCM 9153 / C-125) (Bacillus halodurans) protein is Biotin synthase.